The sequence spans 180 residues: Putative phycocyanobilin lyase CpcS 2 (180 aa).

It belongs to the CpcS/CpeS biliprotein lyase family.

Covalently attaches a chromophore to Cys residue(s) of phycobiliproteins (Potential). In vitro does not act as a chromophore lyase for ApcA1, ApcA2, ApcB, ApcD, ApcF, CpcB or PecB, the lyase activity is therefore unsure. This is Putative phycocyanobilin lyase CpcS 2 (cpeS2) from Nostoc sp. (strain PCC 7120 / SAG 25.82 / UTEX 2576).